The sequence spans 467 residues: 3-isopropylmalate dehydratase large subunit (467 aa).

Positions 348, 409, and 412 each coordinate [4Fe-4S] cluster. The disordered stretch occupies residues asparagine 423 to serine 448.

The protein belongs to the aconitase/IPM isomerase family. LeuC type 1 subfamily. In terms of assembly, heterodimer of LeuC and LeuD. It depends on [4Fe-4S] cluster as a cofactor.

The catalysed reaction is (2R,3S)-3-isopropylmalate = (2S)-2-isopropylmalate. It functions in the pathway amino-acid biosynthesis; L-leucine biosynthesis; L-leucine from 3-methyl-2-oxobutanoate: step 2/4. Catalyzes the isomerization between 2-isopropylmalate and 3-isopropylmalate, via the formation of 2-isopropylmaleate. This is 3-isopropylmalate dehydratase large subunit from Bifidobacterium longum (strain DJO10A).